A 120-amino-acid polypeptide reads, in one-letter code: Small ribosomal subunit protein uS13 (120 aa).

The disordered stretch occupies residues 92–120 (HRKGLPVRGQTTKNNARTRKGKKKTVGSK). The span at 107 to 120 (ARTRKGKKKTVGSK) shows a compositional bias: basic residues.

Belongs to the universal ribosomal protein uS13 family. Part of the 30S ribosomal subunit. Forms a loose heterodimer with protein S19. Forms two bridges to the 50S subunit in the 70S ribosome.

Its function is as follows. Located at the top of the head of the 30S subunit, it contacts several helices of the 16S rRNA. In the 70S ribosome it contacts the 23S rRNA (bridge B1a) and protein L5 of the 50S subunit (bridge B1b), connecting the 2 subunits; these bridges are implicated in subunit movement. Contacts the tRNAs in the A and P-sites. In Helicobacter pylori (strain J99 / ATCC 700824) (Campylobacter pylori J99), this protein is Small ribosomal subunit protein uS13.